The chain runs to 331 residues: Cytosolic sulfotransferase 8 (331 aa).

The span at 1-11 (MGEKDIPRNLK) shows a compositional bias: basic and acidic residues. The segment at 1–31 (MGEKDIPRNLKEEEEEEEENQSEETKSLISS) is disordered. The segment covering 12–22 (EEEEEEEENQS) has biased composition (acidic residues). Position 80-85 (80-85 (KSGTTW)) interacts with 3'-phosphoadenylyl sulfate. The active-site Proton acceptor is the H145. Residues R167, S175, Y231, and 297–299 (RKG) each bind 3'-phosphoadenylyl sulfate.

Belongs to the sulfotransferase 1 family. In terms of tissue distribution, expressed in seedlings and roots.

It localises to the cytoplasm. Sulfotransferase that utilizes 3'-phospho-5'-adenylyl sulfate (PAPS) as sulfonate donor. No activity with brassinosteroids. The sequence is that of Cytosolic sulfotransferase 8 (SOT8) from Arabidopsis thaliana (Mouse-ear cress).